Consider the following 598-residue polypeptide: Auxin response factor 22 (598 aa).

A DNA-binding region (TF-B3) is located at residues Asn124–Gly226. The 82-residue stretch at Arg509 to Arg590 folds into the PB1 domain.

It belongs to the ARF family. Homodimers and heterodimers.

It localises to the nucleus. Functionally, auxin response factors (ARFs) are transcriptional factors that bind specifically to the DNA sequence 5'-TGTCTC-3' found in the auxin-responsive promoter elements (AuxREs). Could act as transcriptional activator or repressor. Formation of heterodimers with Aux/IAA proteins may alter their ability to modulate early auxin response genes expression. This chain is Auxin response factor 22 (ARF22), found in Arabidopsis thaliana (Mouse-ear cress).